Consider the following 239-residue polypeptide: LexA repressor (239 aa).

A DNA-binding region (H-T-H motif) is located at residues 26–46 (FDEMKDALDLKSKSGIHRLIT). Residues S160 and K198 each act as for autocatalytic cleavage activity in the active site.

This sequence belongs to the peptidase S24 family. As to quaternary structure, homodimer.

The enzyme catalyses Hydrolysis of Ala-|-Gly bond in repressor LexA.. Its function is as follows. Represses a number of genes involved in the response to DNA damage (SOS response), including recA and lexA. In the presence of single-stranded DNA, RecA interacts with LexA causing an autocatalytic cleavage which disrupts the DNA-binding part of LexA, leading to derepression of the SOS regulon and eventually DNA repair. The sequence is that of LexA repressor from Methylobacterium sp. (strain 4-46).